Reading from the N-terminus, the 356-residue chain is Protein MGF 360-3L (356 aa).

The ANK repeat unit spans residues 61–93 (KLNTALVLAVKENNEDLIMLFTEWGANINYGLL).

Belongs to the asfivirus MGF 360 family.

Plays a role in virus cell tropism, and may be required for efficient virus replication in macrophages. The sequence is that of Protein MGF 360-3L from African swine fever virus (strain Badajoz 1971 Vero-adapted) (Ba71V).